A 477-amino-acid chain; its full sequence is Bifunctional protein HldE (477 aa).

The segment at 1 to 319 (MTPPLPGFRD…AALGGGPAPA (319 aa)) is ribokinase. 195 to 198 (NLAE) serves as a coordination point for ATP. Residue Asp264 is part of the active site. A cytidylyltransferase region spans residues 346–477 (MTNGCFDLLH…DLIARIRSRG (132 aa)).

The protein in the N-terminal section; belongs to the carbohydrate kinase PfkB family. This sequence in the C-terminal section; belongs to the cytidylyltransferase family. As to quaternary structure, homodimer.

It carries out the reaction D-glycero-beta-D-manno-heptose 7-phosphate + ATP = D-glycero-beta-D-manno-heptose 1,7-bisphosphate + ADP + H(+). It catalyses the reaction D-glycero-beta-D-manno-heptose 1-phosphate + ATP + H(+) = ADP-D-glycero-beta-D-manno-heptose + diphosphate. It functions in the pathway nucleotide-sugar biosynthesis; ADP-L-glycero-beta-D-manno-heptose biosynthesis; ADP-L-glycero-beta-D-manno-heptose from D-glycero-beta-D-manno-heptose 7-phosphate: step 1/4. It participates in nucleotide-sugar biosynthesis; ADP-L-glycero-beta-D-manno-heptose biosynthesis; ADP-L-glycero-beta-D-manno-heptose from D-glycero-beta-D-manno-heptose 7-phosphate: step 3/4. Its function is as follows. Catalyzes the phosphorylation of D-glycero-D-manno-heptose 7-phosphate at the C-1 position to selectively form D-glycero-beta-D-manno-heptose-1,7-bisphosphate. In terms of biological role, catalyzes the ADP transfer from ATP to D-glycero-beta-D-manno-heptose 1-phosphate, yielding ADP-D-glycero-beta-D-manno-heptose. This Halorhodospira halophila (strain DSM 244 / SL1) (Ectothiorhodospira halophila (strain DSM 244 / SL1)) protein is Bifunctional protein HldE.